The following is a 564-amino-acid chain: Proline--tRNA ligase (564 aa).

The protein belongs to the class-II aminoacyl-tRNA synthetase family. ProS type 1 subfamily. Homodimer.

The protein localises to the cytoplasm. It catalyses the reaction tRNA(Pro) + L-proline + ATP = L-prolyl-tRNA(Pro) + AMP + diphosphate. Catalyzes the attachment of proline to tRNA(Pro) in a two-step reaction: proline is first activated by ATP to form Pro-AMP and then transferred to the acceptor end of tRNA(Pro). As ProRS can inadvertently accommodate and process non-cognate amino acids such as alanine and cysteine, to avoid such errors it has two additional distinct editing activities against alanine. One activity is designated as 'pretransfer' editing and involves the tRNA(Pro)-independent hydrolysis of activated Ala-AMP. The other activity is designated 'posttransfer' editing and involves deacylation of mischarged Ala-tRNA(Pro). The misacylated Cys-tRNA(Pro) is not edited by ProRS. The sequence is that of Proline--tRNA ligase from Sulfurihydrogenibium sp. (strain YO3AOP1).